Consider the following 637-residue polypeptide: DNA mismatch repair protein MutL (637 aa).

Residues 353-371 (GQGQRPVSSASMPSASRQA) are compositionally biased toward polar residues. The tract at residues 353–444 (GQGQRPVSSA…SEAASETPHD (92 aa)) is disordered. Residues 378 to 389 (DWIKEGVQDWDW) are compositionally biased toward basic and acidic residues. A compositionally biased stretch (pro residues) spans 396 to 406 (PQNPPQNPPPG). Residues 430 to 444 (SGKELSEAASETPHD) show a composition bias toward basic and acidic residues.

The protein belongs to the DNA mismatch repair MutL/HexB family.

Functionally, this protein is involved in the repair of mismatches in DNA. It is required for dam-dependent methyl-directed DNA mismatch repair. May act as a 'molecular matchmaker', a protein that promotes the formation of a stable complex between two or more DNA-binding proteins in an ATP-dependent manner without itself being part of a final effector complex. This Beijerinckia indica subsp. indica (strain ATCC 9039 / DSM 1715 / NCIMB 8712) protein is DNA mismatch repair protein MutL.